The following is a 236-amino-acid chain: Purine nucleoside phosphorylase DeoD-type (236 aa).

His4 lines the a purine D-ribonucleoside pocket. Phosphate is bound by residues Gly20, Arg24, Arg43, and 87-90 (RVGT). A purine D-ribonucleoside contacts are provided by residues 179-181 (EME) and 203-204 (SD). Asp204 functions as the Proton donor in the catalytic mechanism.

This sequence belongs to the PNP/UDP phosphorylase family. As to quaternary structure, homohexamer; trimer of homodimers.

The catalysed reaction is a purine D-ribonucleoside + phosphate = a purine nucleobase + alpha-D-ribose 1-phosphate. It carries out the reaction a purine 2'-deoxy-D-ribonucleoside + phosphate = a purine nucleobase + 2-deoxy-alpha-D-ribose 1-phosphate. Catalyzes the reversible phosphorolytic breakdown of the N-glycosidic bond in the beta-(deoxy)ribonucleoside molecules, with the formation of the corresponding free purine bases and pentose-1-phosphate. This Streptococcus thermophilus (strain ATCC BAA-491 / LMD-9) protein is Purine nucleoside phosphorylase DeoD-type.